We begin with the raw amino-acid sequence, 389 residues long: Chalcone synthase 2 (389 aa).

Residue Cys164 is part of the active site.

Belongs to the thiolase-like superfamily. Chalcone/stilbene synthases family.

It catalyses the reaction (E)-4-coumaroyl-CoA + 3 malonyl-CoA + 3 H(+) = 2',4,4',6'-tetrahydroxychalcone + 3 CO2 + 4 CoA. It participates in secondary metabolite biosynthesis; flavonoid biosynthesis. In terms of biological role, the primary product of this enzyme is 4,2',4',6'-tetrahydroxychalcone (also termed naringenin-chalcone or chalcone) which can under specific conditions spontaneously isomerize into naringenin. The sequence is that of Chalcone synthase 2 (CHS2) from Solanum lycopersicum (Tomato).